We begin with the raw amino-acid sequence, 310 residues long: Oxygen-dependent coproporphyrinogen-III oxidase (310 aa).

S97 provides a ligand contact to substrate. H101 and H111 together coordinate a divalent metal cation. H111 functions as the Proton donor in the catalytic mechanism. Residue 113–115 (NFR) coordinates substrate. A divalent metal cation is bound by residues H150 and H180. The tract at residues 245-280 (YVEFNLLYDRGTRFGLEFGGRTESILMSLPPRVVWR) is important for dimerization. 263–265 (GGR) provides a ligand contact to substrate.

The protein belongs to the aerobic coproporphyrinogen-III oxidase family. Homodimer. The cofactor is a divalent metal cation.

Its subcellular location is the cytoplasm. It catalyses the reaction coproporphyrinogen III + O2 + 2 H(+) = protoporphyrinogen IX + 2 CO2 + 2 H2O. The protein operates within porphyrin-containing compound metabolism; protoporphyrin-IX biosynthesis; protoporphyrinogen-IX from coproporphyrinogen-III (O2 route): step 1/1. Functionally, involved in the heme biosynthesis. Catalyzes the aerobic oxidative decarboxylation of propionate groups of rings A and B of coproporphyrinogen-III to yield the vinyl groups in protoporphyrinogen-IX. This is Oxygen-dependent coproporphyrinogen-III oxidase from Coxiella burnetii (strain RSA 493 / Nine Mile phase I).